We begin with the raw amino-acid sequence, 192 residues long: MAP6 domain-containing protein 1 (192 aa).

S-palmitoyl cysteine attachment occurs at residues C5, C10, and C11. Positions 36–106 are disordered; that stretch reads LESEEPIPGG…RTKPSATPGR (71 aa). At S38 the chain carries Phosphoserine. The span at 43 to 58 shows a compositional bias: low complexity; sequence PGGVPSRRGPSPAGSR. 2 mn regions span residues 123 to 136 and 158 to 170; these read TTSY…WTGV and DGSP…APEV. The residue at position 160 (S160) is a Phosphoserine.

It belongs to the STOP family. Interacts with calmodulin. In terms of processing, palmitoylated. Palmitoylation enhances association with microtubules.

It is found in the golgi apparatus. Its subcellular location is the cytoplasm. It localises to the cytoskeleton. May have microtubule-stabilizing activity. This is MAP6 domain-containing protein 1 (MAP6D1) from Bos taurus (Bovine).